The sequence spans 371 residues: MSMKQLETSMSSVSLQEKKPTRIKIALHPQSKSEQNETDRASKIPTGRISTTQPQTYYRPTNLTKTPASQVSRRSSYTTDPPSPLTGITGFRNYSLDDFEIGKALGKGKFGKVYLVKDKKTGFVSALKCMEKKELVEGNVEKQFRREVEIQSNLRHTNVLRLFGHFHDKDRVYLILEYVVHGELYKLLRNQKRFTESTASSYIYQMSEALLYLHGKNIIHRDIKPENILLHFNDTIKISDFGWSVHAPSNRRSTLCGTMDYLPPEIVQSRPYDKNVDVWSLGILMYEFLCGAPPFEEPGGAQATYRRIVKLDLRIPPYVSADAADLIKRMLTLDPAKRFKLKDMHKHPWIVRLRPTWKYKVPKTASHERSA.

Polar residues-rich tracts occupy residues 1-15 (MSMKQLETSMSSVSL) and 48-80 (RISTTQPQTYYRPTNLTKTPASQVSRRSSYTTD). A disordered region spans residues 1-84 (MSMKQLETSM…SSYTTDPPSP (84 aa)). Residues 99 to 350 (FEIGKALGKG…LKDMHKHPWI (252 aa)) enclose the Protein kinase domain. ATP contacts are provided by residues 105 to 113 (LGKGKFGKV) and K128. D222 acts as the Proton acceptor in catalysis.

Belongs to the protein kinase superfamily. Ser/Thr protein kinase family. Aurora subfamily.

The protein resides in the nucleus. It is found in the cytoplasm. It localises to the cytoskeleton. Its subcellular location is the spindle. The protein localises to the chromosome. The protein resides in the centromere. It is found in the kinetochore. It catalyses the reaction L-seryl-[protein] + ATP = O-phospho-L-seryl-[protein] + ADP + H(+). The catalysed reaction is L-threonyl-[protein] + ATP = O-phospho-L-threonyl-[protein] + ADP + H(+). Component of the chromosomal passenger complex (CPC), a complex that acts as a key regulator of chromosome segregation and cytokinesis. Has a role in error-correction of aberrent kinetochore-microtubule attachments to ensure that sister kinetochores become bioriented and connect to opposite poles by promoting spindle assembly checkpoint signaling. In Yarrowia lipolytica (strain CLIB 122 / E 150) (Yeast), this protein is Aurora kinase (IPL1).